Here is a 384-residue protein sequence, read N- to C-terminus: Autophagy-related protein 30 (384 aa).

Residues 1–63 (MFSRKQVQKR…ASPGQLRPRT (63 aa)) are disordered. The segment covering 13–27 (ELSSLHCSNSSNSLN) has biased composition (low complexity). Polar residues predominate over residues 45-63 (RGNNRSDNVASPGQLRPRT). Ser-112 bears the Phosphoserine mark. Residues 266 to 291 (VKHDKPSSPLPNYHNTLKQAPSSNSQ) form a disordered region. A compositionally biased stretch (polar residues) spans 278–291 (YHNTLKQAPSSNSQ).

In terms of assembly, interacts with ATG11, ATG17, ATG37, PEX3 and PEX14. Post-translationally, phosphorylation at Ser-112 is required for micro- and macropexophagy.

The protein resides in the vacuole lumen. It localises to the preautophagosomal structure. Its subcellular location is the peroxisome membrane. Acts as the peroxisome receptor for pexophagy. Required for both micropexophagy and macropexophagy, but not for the cytoplasm to vacuole transport (Cvt) or autophagy pathways. Required for functional micropexophagic apparatus (MIPA) and relocation of ATG11 to the peroxisome-sequestering arms of the vacuole. This is Autophagy-related protein 30 (ATG30) from Komagataella phaffii (strain GS115 / ATCC 20864) (Yeast).